We begin with the raw amino-acid sequence, 145 residues long: uncharacterized protein (145 aa).

The chain crosses the membrane as a helical span at residues 4–24 (IYMLVALLISSLVLFAGCVQN).

It localises to the membrane. This is an uncharacterized protein from Methanocaldococcus jannaschii (strain ATCC 43067 / DSM 2661 / JAL-1 / JCM 10045 / NBRC 100440) (Methanococcus jannaschii).